A 490-amino-acid polypeptide reads, in one-letter code: Betaine aldehyde dehydrogenase (490 aa).

Aspartate 93 contributes to the K(+) binding site. Residue 150–152 coordinates NAD(+); that stretch reads GAW. Lysine 162 (charge relay system) is an active-site residue. Position 176-179 (176-179) interacts with NAD(+); that stretch reads KPSE. A K(+)-binding site is contributed by valine 180. Residue 230–233 coordinates NAD(+); the sequence is GIAS. Leucine 246 contacts K(+). Glutamate 252 acts as the Proton acceptor in catalysis. The NAD(+) site is built by glycine 254, cysteine 286, and glutamate 387. Residue cysteine 286 is the Nucleophile of the active site. Cysteine 286 carries the cysteine sulfenic acid (-SOH) modification. 2 residues coordinate K(+): lysine 457 and glycine 460. Glutamate 464 functions as the Charge relay system in the catalytic mechanism.

It belongs to the aldehyde dehydrogenase family. As to quaternary structure, dimer of dimers. The cofactor is K(+).

The enzyme catalyses betaine aldehyde + NAD(+) + H2O = glycine betaine + NADH + 2 H(+). It functions in the pathway amine and polyamine biosynthesis; betaine biosynthesis via choline pathway; betaine from betaine aldehyde: step 1/1. Involved in the biosynthesis of the osmoprotectant glycine betaine. Catalyzes the irreversible oxidation of betaine aldehyde to the corresponding acid. This is Betaine aldehyde dehydrogenase from Pectobacterium carotovorum subsp. carotovorum (strain PC1).